The chain runs to 315 residues: N-acetyl-D-glutamate racemase (315 aa).

Mg(2+) contacts are provided by aspartate 147, glutamate 173, and aspartate 196.

This sequence belongs to the mandelate racemase/muconate lactonizing enzyme family. Mg(2+) is required as a cofactor.

It carries out the reaction N-acetyl-D-glutamate = N-acetyl-L-glutamate. It functions in the pathway amino-acid degradation. Racemase involved in a deamination-independent D-glutamate degradation pathway, named the DgcN-DgcA pathway. Catalyzes the conversion of N-acetyl-D-glutamate to N-acetyl-L-glutamate. Also shows racemase activity towards the dipeptide L-Ala-D-Glu, a key constituent of peptidoglycan muropeptides, suggesting that it may also contribute to the degradation of peptidoglycans. The sequence is that of N-acetyl-D-glutamate racemase from Pseudoalteromonas sp.